The primary structure comprises 205 residues: Guanylate kinase (205 aa).

Positions 7–185 (GNIFIISAAS…AEEDLRHIVN (179 aa)) constitute a Guanylate kinase-like domain. 14–21 (AASGTGKT) contacts ATP.

This sequence belongs to the guanylate kinase family.

Its subcellular location is the cytoplasm. The enzyme catalyses GMP + ATP = GDP + ADP. Functionally, essential for recycling GMP and indirectly, cGMP. The polypeptide is Guanylate kinase (gmk) (Neisseria meningitidis serogroup A / serotype 4A (strain DSM 15465 / Z2491)).